We begin with the raw amino-acid sequence, 286 residues long: Pheromone receptor transcription factor (286 aa).

Ser-2 is modified (N-acetylserine). Ser-2 is modified (phosphoserine). The MADS-box domain occupies 18–72 (RRKIEIKFIENKTRRHVTFSKRKHGIMKKAFELSVLTGTQVLLLVVSETGLVYTF). The span at 97-119 (PDDEEEDEEEDGDDDDDDDDDGN) shows a compositional bias: acidic residues. A disordered region spans residues 97 to 137 (PDDEEEDEEEDGDDDDDDDDDGNDMQRQQPQQQQPQQQQQV). Positions 122–136 (QRQQPQQQQPQQQQQ) are enriched in low complexity. The residue at position 144 (Ser-144) is a Phosphoserine. The tract at residues 167 to 264 (LGGANPNQNS…QQAFANAASP (98 aa)) is disordered. Low complexity predominate over residues 171-246 (NPNQNSMIQQ…QQQQQQQQQP (76 aa)).

Homodimer. Binds DNA with a high specificity in complex with mating-type protein ALPHA1. Also binds DNA with a high specificity as a heterotetramer consisting of an ALPHA2 dimer and an MCM1 dimer. Interacts with YHP1 and YOX1, possibly leading to its inactivation. Interacts with ARG80 and ARG82.

Its subcellular location is the nucleus. In terms of biological role, transcription factor required for the efficient replication of minichromosomes and the transcriptional regulation of early cell cycle genes. Activates transcription of ECB-dependent genes during the G1/M phase. Genes that contain a ECB (early cell box) element in their transcription regulatory region are transcribed only during G1/M phases. Interacts with the alpha-2 repressor or with the alpha-1 activator thereby regulating the expression of mating-type-specific genes. With ARG80, ARG81 and ARG82, coordinates the expression of arginine anabolic and catabolic genes in response to arginine. The chain is Pheromone receptor transcription factor (MCM1) from Saccharomyces cerevisiae (strain ATCC 204508 / S288c) (Baker's yeast).